Reading from the N-terminus, the 324-residue chain is 4-diphosphocytidyl-2-C-methyl-D-erythritol kinase (324 aa).

Lys-11 is an active-site residue. 108–118 (PIGAGLAGGST) contacts ATP. Asp-150 is an active-site residue.

The protein belongs to the GHMP kinase family. IspE subfamily.

It carries out the reaction 4-CDP-2-C-methyl-D-erythritol + ATP = 4-CDP-2-C-methyl-D-erythritol 2-phosphate + ADP + H(+). It participates in isoprenoid biosynthesis; isopentenyl diphosphate biosynthesis via DXP pathway; isopentenyl diphosphate from 1-deoxy-D-xylulose 5-phosphate: step 3/6. Its function is as follows. Catalyzes the phosphorylation of the position 2 hydroxy group of 4-diphosphocytidyl-2C-methyl-D-erythritol. In Cyanothece sp. (strain PCC 7425 / ATCC 29141), this protein is 4-diphosphocytidyl-2-C-methyl-D-erythritol kinase.